A 716-amino-acid chain; its full sequence is MSQVMSSPLLAGGPAVGLAPCEEPRRVLHPAPSPSLPPPCPYYTTEGWGAQALMAPMPCKGPPGRLQPAPQAGANASCLLKAPGEQVSGAQEDLDSYIDFSLESLNQMILELDPTFQLLPPGPGGPEAQPTQSTTLGKKKEEPEALDIKYIEVTSTRSRCHDGPRSCCSPSVTPPFGSPRTGGLLLSRDLPRETRSSSESLIFSGSQGRGHQHPAPPSAVPSSHPPTSPSISIPGMGSKASGPHGLGSPLVASPSLEKGLGGQGPQLSSRVSMLSGSPASDISYVFGSSQSLLHSSISSHQSSSRSLESPSSSSSSLNNLGPVSLYTRASDLQVPSNATPSMGQPRATRSPPLAKEHASSCPPSITNSMTDIPIVLINGFPEPGSPPSQRTPGPQDFVRPGATSSSMPCPATRSHSQTLPEAPPTASPEGPARDMQPTMKFVMDTSKYWFKPSISREQAIELLRKEEPGAFIVRDSSSYRGSFGLALKVQEAPTPAQSRPGEDSSDLIRHFLIESSAKGVHLKGADEEPYFGSLSAFVCQHSIMALALPCKLVIPQKELGGGDGASDPSADGQASCLKKSAGCHALYLSSVSVETLSGALAVEKAISATLERDVLPTPTVVHFKVTEQGITLTDVQRKVFFRRHYPLATLRFCGMDPEQRKWQKYCKPSRIFGFVAKSQTESQENVCHLFAEYDTLQPASQVIRLVGALLQDPERM.

The first 17 residues, 1–17 (MSQVMSSPLLAGGPAVG), serve as a signal peptide directing secretion. Disordered regions lie at residues 119–274 (LPPG…VSML), 301–322 (QSSSRSLESPSSSSSSLNNLGP), 334–366 (VPSNATPSMGQPRATRSPPLAKEHASSCPPSIT), and 379–436 (GFPE…RDMQ). Residues 138–150 (KKKEEPEALDIKY) are compositionally biased toward basic and acidic residues. The span at 197–206 (SSESLIFSGS) shows a compositional bias: polar residues. A compositionally biased stretch (pro residues) spans 214–228 (PAPPSAVPSSHPPTS). Position 248 is a phosphoserine (Ser248). Over residues 265–274 (PQLSSRVSML) the composition is skewed to polar residues. A compositionally biased stretch (polar residues) spans 402 to 419 (ATSSSMPCPATRSHSQTL). The SH2 domain occupies 449-556 (WFKPSISREQ…ALPCKLVIPQ (108 aa)). Residues 583–704 (CHALYLSSVS…TLQPASQVIR (122 aa)) form the PTB domain.

The protein belongs to the PTEN phosphatase protein family. As to quaternary structure, interacts (via SH2 domain) with Rho GTPase-activating protein DLC1 (via C-terminus); the interaction is independent of DLC1 tyrosine phosphorylation. Interacts with integrin ITGB1; the interaction displaces tensin TNS3 from the ITGB1 cytoplasmic tail and promotes ITGB1 stability. Interacts (via SH2 domain) with E3 ubiquitin-protein ligase CBL (phosphorylated on 'Tyr-782'); the interaction is enhanced in the presence of EGF and reduces interaction of CBL with EGFR. Interacts (via SH2 domain) with receptor tyrosine kinase MET (when phosphorylated); the interaction increases MET protein stability.

The protein localises to the cell junction. Its subcellular location is the focal adhesion. It localises to the cytoplasm. It is found in the cytoskeleton. In terms of biological role, promotes EGF-induced cell migration by displacing tensin TNS3 from the cytoplasmic tail of integrin ITGB1 which results in dissociation of TNS3 from focal adhesions, disassembly of actin stress fibers and initiation of cell migration. Suppresses ligand-induced degradation of EGFR by reducing EGFR ubiquitination in the presence of EGF. Increases MET protein stability by inhibiting MET endocytosis and subsequent lysosomal degradation which leads to increased cell survival, proliferation and migration. The chain is Tensin-4 (TNS4) from Bos taurus (Bovine).